Consider the following 921-residue polypeptide: Leucine--tRNA ligase (921 aa).

The 'HIGH' region signature appears at 80 to 90; sequence PYPSGKLHMGH. Positions 667 to 671 match the 'KMSKS' region motif; that stretch reads KMSKS. Lys670 serves as a coordination point for ATP.

The protein belongs to the class-I aminoacyl-tRNA synthetase family.

The protein resides in the cytoplasm. The enzyme catalyses tRNA(Leu) + L-leucine + ATP = L-leucyl-tRNA(Leu) + AMP + diphosphate. The chain is Leucine--tRNA ligase from Psychrobacter arcticus (strain DSM 17307 / VKM B-2377 / 273-4).